The chain runs to 105 residues: Transcriptional regulator SutA (105 aa).

The segment covering 1–37 (MSEEELEQDELDGADEDDGEELAAADDGEADSSDGDE) has biased composition (acidic residues). The segment at 1 to 105 (MSEEELEQDE…PDSKYGSRPI (105 aa)) is disordered. Basic and acidic residues-rich tracts occupy residues 59–83 (AKQK…KVQE) and 92–105 (PPKK…SRPI).

In terms of assembly, interacts with RNA polymerase.

Functionally, causes widespread changes in gene expression, and plays a direct role in the regulation of genes encoding ribosomal components. Associates with chromosomal DNA through interaction with RNA polymerase. Contributes to biofilm formation and secondary metabolite production. Important during transitions to and from the survival state. In Pseudomonas aeruginosa (strain UCBPP-PA14), this protein is Transcriptional regulator SutA.